The sequence spans 102 residues: Legumin-like protein Mac i 2 (102 aa).

It belongs to the 11S seed storage protein (globulins) family.

Seed storage protein. This chain is Legumin-like protein Mac i 2, found in Macadamia integrifolia (Macadamia nut).